A 253-amino-acid polypeptide reads, in one-letter code: Low affinity immunoglobulin gamma Fc region receptor III-B (253 aa).

The first 20 residues, 1–20 (MGQPLPPVALLLLVSASSRA), serve as a signal peptide directing secretion. Residues 21–207 (ADVPKALVLL…VSSSVLPWHQ (187 aa)) lie on the Extracellular side of the membrane. Ig-like C2-type domains follow at residues 24–105 (PKAL…LRVH) and 120–189 (EGEP…VTIT). 2 cysteine pairs are disulfide-bonded: C47-C89 and C128-C172. N-linked (GlcNAc...) asparagine glycosylation is found at N56, N63, N165, and N180. Residues 208–226 (IAFCLVMGLLLAADTGLYF) form a helical membrane-spanning segment. Over 227–253 (SVQRDLRSSQRARKEHTLGWSLGSQDK) the chain is Cytoplasmic.

In terms of assembly, forms a heterooligomeric complex with ITAM-containing signaling subunits FCER1G. Interacts (via transmembrane domain) with signaling subunits; this interaction is a prerequisite for receptor complex expression on the cell surface and intracellular signal transduction. Binds the Fc region of antigen-complexed IgG.

It is found in the cell membrane. Its function is as follows. Receptor for the invariable Fc fragment of immunoglobulin gamma (IgG). Optimally activated upon binding of clustered antigen-IgG complexes displayed on cell surfaces, triggers lysis of antibody-coated cells, a process known as antibody-dependent cellular cytotoxicity (ADCC). Does not bind free monomeric IgG, thus avoiding inappropriate effector cell activation in the absence of antigenic trigger. Mediates IgG effector functions on natural killer (NK) cells. Binds antigen-IgG complexes generated upon infection and triggers NK cell-dependent cytokine production and degranulation to limit viral load and propagation. Fc-binding subunit that associates with FCER1G adapters to form functional signaling complexes. Following the engagement of antigen-IgG complexes, triggers phosphorylation of immunoreceptor tyrosine-based activation motif (ITAM)-containing adapters with subsequent activation of phosphatidylinositol 3-kinase signaling and sustained elevation of intracellular calcium that ultimately drive NK cell activation. Mediates enhanced ADCC in response to afucosylated IgGs. The polypeptide is Low affinity immunoglobulin gamma Fc region receptor III-B (FCGR3B) (Oryctolagus cuniculus (Rabbit)).